The primary structure comprises 232 residues: Esterase YpfH (232 aa).

Catalysis depends on charge relay system residues S111, D159, and H191.

Belongs to the AB hydrolase superfamily. AB hydrolase 2 family.

Functionally, displays esterase activity toward palmitoyl-CoA and pNP-butyrate. This chain is Esterase YpfH (ypfH), found in Escherichia coli (strain K12).